A 349-amino-acid polypeptide reads, in one-letter code: Glycerol-3-phosphate dehydrogenase [NAD(+)], cytoplasmic (349 aa).

NAD(+) is bound at residue 10–15 (GSGNWG). Lys-120 lines the substrate pocket. Position 153 (Ala-153) interacts with NAD(+). Residue Lys-204 is the Proton acceptor of the active site. Arg-269 is a binding site for NAD(+). Residue 269–270 (RN) participates in substrate binding. At Lys-289 the chain carries N6-succinyllysine. Lys-296 and Gln-298 together coordinate NAD(+). Phosphotyrosine is present on Tyr-326.

It belongs to the NAD-dependent glycerol-3-phosphate dehydrogenase family. As to quaternary structure, homodimer.

It is found in the cytoplasm. The enzyme catalyses sn-glycerol 3-phosphate + NAD(+) = dihydroxyacetone phosphate + NADH + H(+). Functionally, has glycerol-3-phosphate dehydrogenase activity. The protein is Glycerol-3-phosphate dehydrogenase [NAD(+)], cytoplasmic (GPD1) of Bos taurus (Bovine).